Reading from the N-terminus, the 427-residue chain is Glutamate-1-semialdehyde 2,1-aminomutase (427 aa).

Residue lysine 266 is modified to N6-(pyridoxal phosphate)lysine.

It belongs to the class-III pyridoxal-phosphate-dependent aminotransferase family. HemL subfamily. In terms of assembly, homodimer. The cofactor is pyridoxal 5'-phosphate.

The protein resides in the cytoplasm. It catalyses the reaction (S)-4-amino-5-oxopentanoate = 5-aminolevulinate. It participates in porphyrin-containing compound metabolism; protoporphyrin-IX biosynthesis; 5-aminolevulinate from L-glutamyl-tRNA(Glu): step 2/2. The polypeptide is Glutamate-1-semialdehyde 2,1-aminomutase (Aromatoleum aromaticum (strain DSM 19018 / LMG 30748 / EbN1) (Azoarcus sp. (strain EbN1))).